A 272-amino-acid polypeptide reads, in one-letter code: Peptidoglycolipid exporter Gap (272 aa).

The next 6 helical transmembrane spans lie at 5–25, 36–56, 79–99, 171–191, 206–226, and 252–272; these read ILGL…ILLV, VVFW…PLFV, IEPF…VIAL, LWVA…VLLV, IIAV…TLLS, and ILLV…LGVI.

Belongs to the peptidoglycolipid addressing protein (GAP) (TC 2.A.116) family.

The protein localises to the cell inner membrane. Required for the transport of peptidoglycolipids (GPLs) to the cell surface. The protein is Peptidoglycolipid exporter Gap of Mycolicibacterium smegmatis (strain ATCC 700084 / mc(2)155) (Mycobacterium smegmatis).